A 585-amino-acid chain; its full sequence is Formate--tetrahydrofolate ligase (585 aa).

Residue 65-72 (TPHGEGKT) coordinates ATP.

It belongs to the formate--tetrahydrofolate ligase family.

It carries out the reaction (6S)-5,6,7,8-tetrahydrofolate + formate + ATP = (6R)-10-formyltetrahydrofolate + ADP + phosphate. The protein operates within one-carbon metabolism; tetrahydrofolate interconversion. The sequence is that of Formate--tetrahydrofolate ligase from Shewanella baltica (strain OS155 / ATCC BAA-1091).